The sequence spans 249 residues: MKKLLLIAAASTALLTSGLSFADCDMNSSVDSSTNSSMSSSVENQWYLKLNAGGVIFNKTKPKGADFKLNNIKSNIKSNTGFTGEIGAGYYIMDNLRTDLTIGTVASSHLKKSKTYPDGNSFSVKNKPTIVSVLLNGYVDFVDLSMFKVFAGAGVGAAFVKEKIHSKDIKGGVTDTFNGTTKNKTNFAYQLSLGTSFEVAQGVKAELVYSWRDYGKTKNTTKTINGDKVKFGGTHYKGHNLMAGLRFDM.

The signal sequence occupies residues 1-22 (MKKLLLIAAASTALLTSGLSFA).

Functionally, adheres to biotinylated epithelial (Vero cell) proteins. The protein is Putative adhesin RC1281 of Rickettsia conorii (strain ATCC VR-613 / Malish 7).